We begin with the raw amino-acid sequence, 381 residues long: E3 ubiquitin-protein ligase KCMF1 (381 aa).

The residue at position 2 (Ser-2) is an N-acetylserine. Ser-2 carries the post-translational modification Phosphoserine. A ZZ-type zinc finger spans residues 4 to 60; sequence HEGVSCDACLKGNFRGRRYKCLICYDYDLCASCYESGATTTRHTTDHPMQCILTRVD. Residues Cys-9, Cys-12, Cys-24, Cys-27, Cys-33, Cys-36, His-46, and His-50 each coordinate Zn(2+). The C2H2-type zinc finger occupies 78 to 101; sequence FTCPYCGKMGYTETSLQEHVTSEH. A disordered region spans residues 154 to 193; the sequence is MFHPGRGLGGPRARRSNMHFTSSSTGGLSSSQSSYSPSNR. Residues Ser-169, Ser-189, and Ser-212 each carry the phosphoserine modification. Residues 175 to 191 are compositionally biased toward low complexity; sequence SSSTGGLSSSQSSYSPS. Residues 225-257 adopt a coiled-coil conformation; that stretch reads SQLQQLQMQLQLERQHAQAARQQLETARNATRR. The segment at 294-314 is disordered; the sequence is TRLNDPKMSETERQSMESERA. Residues 297–314 are compositionally biased toward basic and acidic residues; it reads NDPKMSETERQSMESERA. 2 positions are modified to phosphoserine: Ser-335 and Ser-336.

Belongs to the KCMF1 family. Component of the SIFI complex, composed of KCMF1, UBR4 and calmodulin (CALM1, CALM2 or CALM3). As to expression, spleen, small intestine, ovary, peripheral blood, lung, kidney and pancreas. Expressed at low levels in the thymus, prostate, testis, colon, heart, brain, placenta and liver.

The protein resides in the cytoplasm. It is found in the late endosome. The protein localises to the lysosome. It carries out the reaction S-ubiquitinyl-[E2 ubiquitin-conjugating enzyme]-L-cysteine + [acceptor protein]-L-lysine = [E2 ubiquitin-conjugating enzyme]-L-cysteine + N(6)-ubiquitinyl-[acceptor protein]-L-lysine.. It participates in protein modification; protein ubiquitination. Functionally, E3 ubiquitin-protein ligase which accepts ubiquitin from an E2 ubiquitin-conjugating enzyme and then transfers it to targeted substrates, promoting their degradation by the proteasome. Together with UBR4, component of the N-end rule pathway: ubiquitinates proteins bearing specific N-terminal residues that are destabilizing according to the N-end rule, leading to their degradation. Does not ubiquitinate proteins that are acetylated at the N-terminus. Together with UBR4, part of a protein quality control pathway that catalyzes ubiquitination and degradation of proteins that have been oxidized in response to reactive oxygen species (ROS): recognizes proteins with an Arg-CysO3(H) degron at the N-terminus, and mediates assembly of heterotypic 'Lys-63'-/'Lys-27'-linked branched ubiquitin chains on oxidized proteins, leading to their degradation by autophagy. Catalytic component of the SIFI complex, a multiprotein complex required to inhibit the mitochondrial stress response after a specific stress event has been resolved: ubiquitinates and degrades (1) components of the HRI-mediated signaling of the integrated stress response, such as DELE1 and EIF2AK1/HRI, as well as (2) unimported mitochondrial precursors. Within the SIFI complex, UBR4 initiates ubiquitin chain that are further elongated or branched by KCMF1. This is E3 ubiquitin-protein ligase KCMF1 from Homo sapiens (Human).